A 513-amino-acid polypeptide reads, in one-letter code: Putative ribose/galactose/methyl galactoside import ATP-binding protein 3 (513 aa).

2 consecutive ABC transporter domains span residues I15–Q252 and T263–E508. G47–S54 contacts ATP.

This sequence belongs to the ABC transporter superfamily. Carbohydrate importer 2 (CUT2) (TC 3.A.1.2) family.

The protein localises to the cell inner membrane. The catalysed reaction is D-ribose(out) + ATP + H2O = D-ribose(in) + ADP + phosphate + H(+). It carries out the reaction D-galactose(out) + ATP + H2O = D-galactose(in) + ADP + phosphate + H(+). Functionally, part of an ABC transporter complex involved in carbohydrate import. Could be involved in ribose, galactose and/or methyl galactoside import. Responsible for energy coupling to the transport system. This is Putative ribose/galactose/methyl galactoside import ATP-binding protein 3 from Burkholderia ambifaria (strain ATCC BAA-244 / DSM 16087 / CCUG 44356 / LMG 19182 / AMMD) (Burkholderia cepacia (strain AMMD)).